Here is a 307-residue protein sequence, read N- to C-terminus: MTVITDITELIGNTPLLRLKNFDVPEGVAVYAKLEMMNPGGSIKDRLGDMLIRDALDSGKVKPGGVIIEATAGNTGIGLALSARKYGLKAIFCVPEHFSREKQQIMQALGASIIHTPRQDGMQGAIQKAIQLETEIENSYCVLQFKNRVNPSTYYKTLGPEMWEALDGNIHTFVAGAGSGGTFAGTASFLKEKNPAVKTVIVEPVGSILNGGEPHAHKTEGIGMEFIPDYMDKSHFDEIYTVTDENAFRLVKEAAEKEGLLIGSSSGAALYAALEEAKKASAGTNIVTVFPDSSDRYISKQIYEGGI.

Lysine 44 carries the N6-(pyridoxal phosphate)lysine modification. Residues asparagine 74, 178–182 (GSGGT), and serine 265 contribute to the pyridoxal 5'-phosphate site.

Belongs to the cysteine synthase/cystathionine beta-synthase family. Pyridoxal 5'-phosphate serves as cofactor.

It carries out the reaction O-acetyl-L-serine + L-homocysteine = L,L-cystathionine + acetate + H(+). Functionally, catalyzes the conversion of O-acetylserine and homocysteine to cystathionine. The sequence is that of O-acetylserine dependent cystathionine beta-synthase (mccA) from Bacillus subtilis (strain 168).